The chain runs to 256 residues: Enolase-phosphatase E1 (256 aa).

Residues Asp14 and Glu16 each contribute to the Mg(2+) site. Substrate-binding positions include 142–143 (SS) and Lys176. A Mg(2+)-binding site is contributed by Asp201.

It belongs to the HAD-like hydrolase superfamily. MasA/MtnC family. Monomer. Requires Mg(2+) as cofactor.

The protein resides in the cytoplasm. It is found in the nucleus. The catalysed reaction is 5-methylsulfanyl-2,3-dioxopentyl phosphate + H2O = 1,2-dihydroxy-5-(methylsulfanyl)pent-1-en-3-one + phosphate. The protein operates within amino-acid biosynthesis; L-methionine biosynthesis via salvage pathway; L-methionine from S-methyl-5-thio-alpha-D-ribose 1-phosphate: step 3/6. Its pathway is amino-acid biosynthesis; L-methionine biosynthesis via salvage pathway; L-methionine from S-methyl-5-thio-alpha-D-ribose 1-phosphate: step 4/6. Functionally, bifunctional enzyme that catalyzes the enolization of 2,3-diketo-5-methylthiopentyl-1-phosphate (DK-MTP-1-P) into the intermediate 2-hydroxy-3-keto-5-methylthiopentenyl-1-phosphate (HK-MTPenyl-1-P), which is then dephosphorylated to form the acireductone 1,2-dihydroxy-3-keto-5-methylthiopentene (DHK-MTPene). The protein is Enolase-phosphatase E1 of Drosophila yakuba (Fruit fly).